The following is a 338-amino-acid chain: Sporulation-specific protein 4 (338 aa).

Residues 14 to 37 (QEENKNFLHKNTNEPNEMEQSQTQ) are disordered. Residues 22–37 (HKNTNEPNEMEQSQTQ) show a composition bias toward polar residues.

Its function is as follows. Not essential for sporulation. Might be a component of the cell wall. The polypeptide is Sporulation-specific protein 4 (SPS4) (Saccharomyces cerevisiae (strain ATCC 204508 / S288c) (Baker's yeast)).